Consider the following 160-residue polypeptide: Transcription antitermination protein NusB (160 aa).

This sequence belongs to the NusB family.

Involved in transcription antitermination. Required for transcription of ribosomal RNA (rRNA) genes. Binds specifically to the boxA antiterminator sequence of the ribosomal RNA (rrn) operons. The sequence is that of Transcription antitermination protein NusB from Chlamydia pneumoniae (Chlamydophila pneumoniae).